Reading from the N-terminus, the 151-residue chain is Sperm surface protein Sp17 (151 aa).

Disordered regions lie at residues 56 to 115 (DPAE…EKEE) and 127 to 151 (GHIA…EENK). Positions 62-98 (SKVEDRFYNNHAFEEQEPPEKSDPKQEESQISGKEEE) are enriched in basic and acidic residues. In terms of domain architecture, IQ spans 114–143 (EEVAAVKIQAAFRGHIAREEAKKMKTNSLQ).

In terms of assembly, homodimer. May interact with ROPN1. In terms of tissue distribution, testis and sperm specific.

The protein localises to the membrane. Sperm surface zona pellucida binding protein. Helps to bind spermatozoa to the zona pellucida with high affinity. Might function in binding zona pellucida and carbohydrates. The sequence is that of Sperm surface protein Sp17 (SPA17) from Homo sapiens (Human).